A 455-amino-acid polypeptide reads, in one-letter code: Chromosomal replication initiator protein DnaA (455 aa).

Residues 1–74 (MFDIEKFWQH…IQSAYGYAGI (74 aa)) are domain I, interacts with DnaA modulators. The tract at residues 74 to 117 (IEILPVFQINENNDSPERIVTPEPRYAIQLQQEKRAHKQFTKNL) is domain II. The segment at 118–334 (KLNEKYTFDN…GALVKVQAYA (217 aa)) is domain III, AAA+ region. The ATP site is built by Gly-162, Gly-164, Lys-165, and Thr-166. The domain IV, binds dsDNA stretch occupies residues 335-455 (TIERADINVN…VFDLKQMIEH (121 aa)).

Belongs to the DnaA family. In terms of assembly, oligomerizes as a right-handed, spiral filament on DNA at oriC.

It is found in the cytoplasm. Its function is as follows. Plays an essential role in the initiation and regulation of chromosomal replication. ATP-DnaA binds to the origin of replication (oriC) to initiate formation of the DNA replication initiation complex once per cell cycle. Binds the DnaA box (a 9 base pair repeat at the origin) and separates the double-stranded (ds)DNA. Forms a right-handed helical filament on oriC DNA; dsDNA binds to the exterior of the filament while single-stranded (ss)DNA is stabiized in the filament's interior. The ATP-DnaA-oriC complex binds and stabilizes one strand of the AT-rich DNA unwinding element (DUE), permitting loading of DNA polymerase. After initiation quickly degrades to an ADP-DnaA complex that is not apt for DNA replication. Binds acidic phospholipids. The chain is Chromosomal replication initiator protein DnaA from Lactobacillus helveticus (strain DPC 4571).